The chain runs to 394 residues: NAD(P)H-quinone oxidoreductase subunit H (394 aa).

This sequence belongs to the complex I 49 kDa subunit family. As to quaternary structure, NDH-1 can be composed of about 15 different subunits; different subcomplexes with different compositions have been identified which probably have different functions.

Its subcellular location is the cellular thylakoid membrane. It carries out the reaction a plastoquinone + NADH + (n+1) H(+)(in) = a plastoquinol + NAD(+) + n H(+)(out). The enzyme catalyses a plastoquinone + NADPH + (n+1) H(+)(in) = a plastoquinol + NADP(+) + n H(+)(out). NDH-1 shuttles electrons from an unknown electron donor, via FMN and iron-sulfur (Fe-S) centers, to quinones in the respiratory and/or the photosynthetic chain. The immediate electron acceptor for the enzyme in this species is believed to be plastoquinone. Couples the redox reaction to proton translocation, and thus conserves the redox energy in a proton gradient. Cyanobacterial NDH-1 also plays a role in inorganic carbon-concentration. The chain is NAD(P)H-quinone oxidoreductase subunit H from Prochlorococcus marinus (strain NATL1A).